A 748-amino-acid polypeptide reads, in one-letter code: Cysteine--tRNA ligase, cytoplasmic (748 aa).

The tract at residues 1-25 is disordered; sequence MADSSGQQGKGRRVQPQWSPPAGTQ. Ala-2 is modified (N-acetylalanine). Ser-19 is modified (phosphoserine). Zn(2+) is bound at residue Cys-55. Gly-56 lines the L-cysteine pocket. The short motif at 57–67 is the 'HIGH' region element; the sequence is PTVYDASHMGH. At Arg-79 the chain carries Phosphoserine. Thr-96 lines the L-cysteine pocket. A 'KIIK' region motif is present at residues 101 to 104; the sequence is KIIK. A phosphoserine mark is found at Ser-305 and Ser-307. Zn(2+) is bound by residues Cys-348, His-373, and Glu-377. Position 373 (His-373) interacts with L-cysteine. Residues 406–410 carry the 'KMSKS' region motif; that stretch reads KMSKS. Residue Lys-409 coordinates ATP. N6-acetyllysine is present on Lys-503. The span at 653-679 shows a compositional bias: basic and acidic residues; sequence EKRRVEEEKRKKKEEAARRKQEQEAAK. Residues 653–686 are disordered; it reads EKRRVEEEKRKKKEEAARRKQEQEAAKLAKMKIP. Residue Ser-746 is modified to Phosphoserine.

It belongs to the class-I aminoacyl-tRNA synthetase family. Homodimer. Zn(2+) serves as cofactor.

It is found in the cytoplasm. It carries out the reaction tRNA(Cys) + L-cysteine + ATP = L-cysteinyl-tRNA(Cys) + AMP + diphosphate. Its function is as follows. Catalyzes the ATP-dependent ligation of cysteine to tRNA(Cys). This Homo sapiens (Human) protein is Cysteine--tRNA ligase, cytoplasmic.